Reading from the N-terminus, the 455-residue chain is 5'-nucleotidase domain-containing protein 1 (455 aa).

D16 serves as the catalytic Nucleophile. 2 residues coordinate Mg(2+): D16 and D18. The Proton donor role is filled by D18. At K171 the chain carries N6-acetyllysine. Position 313 (D313) interacts with Mg(2+). Positions 339 to 364 (GDEGTRSQRPEESEPLEKKGKYEGPK) are enriched in basic and acidic residues. The tract at residues 339 to 368 (GDEGTRSQRPEESEPLEKKGKYEGPKAKPL) is disordered.

This sequence belongs to the 5'(3')-deoxyribonucleotidase family.

This Homo sapiens (Human) protein is 5'-nucleotidase domain-containing protein 1 (NT5DC1).